An 80-amino-acid chain; its full sequence is Venom protein HGE029 (80 aa).

Residues 1–22 (MNAKAFLAIFMIALLITDRAEA) form the signal peptide.

Belongs to the non-disulfide-bridged peptide (NDBP) superfamily. Long chain multifunctional peptide (group 2) family. Expressed by the venom gland.

Its subcellular location is the secreted. This is Venom protein HGE029 from Hoffmannihadrurus gertschi (Scorpion).